A 470-amino-acid polypeptide reads, in one-letter code: Nuclear receptor subfamily 0 group B member 1 (470 aa).

3 consecutive repeat copies span residues 1 to 67, 68 to 133, and 134 to 200. The tract at residues 1–253 is 4 X 67 AA tandem repeats; it reads MAGEDHQWQG…RPVALKNPQV (253 aa). Short sequence motifs (LXXLL motif) lie at residues 13–17, 80–84, and 146–150; these read LYNML, LYSML, and LYSLL. One copy of the 4; truncated repeat lies at 201 to 253; the sequence is FCGEDQPQQGSTLYSMPTSTNQTPAAPEERPGAPWWDTSCGALRPVALKNPQV. The NR LBD domain occupies 205 to 469; it reads DQPQQGSTLY…DMMLEMLCTK (265 aa). An AF-2 motif motif is present at residues 461–466; it reads MMLEML.

Belongs to the nuclear hormone receptor family. NR0 subfamily. Homodimer. Interacts with NR5A1, NR5A2, NR0B2 and with COPS2. Interacts with ESRRB; represses ESRRB activity at the GATA6 promoter.

The protein resides in the nucleus. It localises to the cytoplasm. Nuclear receptor that lacks a DNA-binding domain and acts as a corepressor that inhibits the transcriptional activity of other nuclear receptors through heterodimeric interactions. Component of a cascade required for the development of the hypothalamic-pituitary-adrenal-gonadal axis. May also have a role in the development of the embryo and in the maintenance of embryonic stem cell pluripotency. In Callithrix jacchus (White-tufted-ear marmoset), this protein is Nuclear receptor subfamily 0 group B member 1 (NR0B1).